Consider the following 336-residue polypeptide: Quinolinate synthase (336 aa).

Positions 25 and 42 each coordinate iminosuccinate. Residue Cys-86 coordinates [4Fe-4S] cluster. Iminosuccinate contacts are provided by residues 117 to 119 (YIN) and Ser-138. Cys-198 contacts [4Fe-4S] cluster. Residues 224–226 (HPE) and Thr-241 contribute to the iminosuccinate site. Residue Cys-288 coordinates [4Fe-4S] cluster.

The protein belongs to the quinolinate synthase family. Type 3 subfamily. It depends on [4Fe-4S] cluster as a cofactor.

It is found in the cytoplasm. It carries out the reaction iminosuccinate + dihydroxyacetone phosphate = quinolinate + phosphate + 2 H2O + H(+). It functions in the pathway cofactor biosynthesis; NAD(+) biosynthesis; quinolinate from iminoaspartate: step 1/1. Its function is as follows. Catalyzes the condensation of iminoaspartate with dihydroxyacetone phosphate to form quinolinate. In Helicobacter pylori (strain HPAG1), this protein is Quinolinate synthase.